Reading from the N-terminus, the 133-residue chain is Ribulose bisphosphate carboxylase small subunit (133 aa).

This sequence belongs to the RuBisCO small chain family. In terms of assembly, heterohexadecamer of 8 large and 8 small subunits.

Functionally, ruBisCO catalyzes two reactions: the carboxylation of D-ribulose 1,5-bisphosphate, the primary event in carbon dioxide fixation, as well as the oxidative fragmentation of the pentose substrate. Both reactions occur simultaneously and in competition at the same active site. Although the small subunit is not catalytic it is essential for maximal activity. The sequence is that of Ribulose bisphosphate carboxylase small subunit from Xanthobacter flavus.